The primary structure comprises 84 residues: Small ribosomal subunit protein uS17 (84 aa).

Belongs to the universal ribosomal protein uS17 family. Part of the 30S ribosomal subunit.

In terms of biological role, one of the primary rRNA binding proteins, it binds specifically to the 5'-end of 16S ribosomal RNA. This chain is Small ribosomal subunit protein uS17, found in Aliivibrio salmonicida (strain LFI1238) (Vibrio salmonicida (strain LFI1238)).